A 219-amino-acid polypeptide reads, in one-letter code: GPI ethanolamine phosphate transferase, stabilizing subunit (219 aa).

A run of 6 helical transmembrane segments spans residues 11–31 (YTHLLCIFSIILSVFIPSLFL), 42–62 (TWLCICSGFVTAVNLVLYLVV), 86–106 (YFLMSCFSFHVIFVLYGAPLI), 113–133 (FLFAVILSTFTTVPCLCLLGP), 155–175 (LQITTISSFVGAWLGALPIPL), and 189–209 (TLGATFGYVAGLVISPLWIYW).

This sequence belongs to the PIGF family. Part of the ethanolamine phosphate transferase 3 complex composed by PIGO and PIGF. Part of the ethanolamine phosphate transferase 2 complex with PIGG. PIGF is required to stabilize PIGG and PIGO.

Its subcellular location is the endoplasmic reticulum membrane. It functions in the pathway glycolipid biosynthesis; glycosylphosphatidylinositol-anchor biosynthesis. Functionally, stabilizing subunit of the ethanolamine phosphate transferase 3 and ethanolamine phosphate transferase 2 complexes that sequentially transfer an ethanolamine phosphate (EtNP) from a phosphatidylethanolamine (PE) to the 6-OH position of the third alpha-1,2-linked mannose and the second alpha-1,6-linked mannose of the alpha-D-Man-(1-&gt;2)-alpha-D-Man-(1-&gt;6)-2-PEtn-alpha-D-Man-(1-&gt;4)-alpha-D-GlcN-(1-&gt;6)-(1-radyl,2-acyl-sn-glycero-3-phospho)-2-acyl-inositol (also termed H6) intermediate to generate a 6-PEtn-alpha-D-Man-(1-&gt;2)-6-PEtn-alpha-D-Man-(1-&gt;6)-2-PEtn-alpha-D-Man-(1-&gt;4)-alpha-D-GlcN-(1-&gt;6)-(1-radyl,2-acyl-sn-glycero-3-phospho)-2-acyl-inositol (also termed H8). Participates in the tenth and eleventh steps of the glycosylphosphatidylinositol-anchor biosynthesis, in association with PIGO and PIGG, respectively. This Homo sapiens (Human) protein is GPI ethanolamine phosphate transferase, stabilizing subunit.